A 323-amino-acid chain; its full sequence is Beta-ketoacyl-[acyl-carrier-protein] synthase III (323 aa).

Active-site residues include cysteine 113 and histidine 250. The interval 251 to 255 (QANKR) is ACP-binding. Asparagine 280 is a catalytic residue.

It belongs to the thiolase-like superfamily. FabH family. Homodimer.

It is found in the cytoplasm. The enzyme catalyses malonyl-[ACP] + acetyl-CoA + H(+) = 3-oxobutanoyl-[ACP] + CO2 + CoA. It participates in lipid metabolism; fatty acid biosynthesis. In terms of biological role, catalyzes the condensation reaction of fatty acid synthesis by the addition to an acyl acceptor of two carbons from malonyl-ACP. Catalyzes the first condensation reaction which initiates fatty acid synthesis and may therefore play a role in governing the total rate of fatty acid production. Possesses both acetoacetyl-ACP synthase and acetyl transacylase activities. Its substrate specificity determines the biosynthesis of branched-chain and/or straight-chain of fatty acids. The sequence is that of Beta-ketoacyl-[acyl-carrier-protein] synthase III from Mesorhizobium japonicum (strain LMG 29417 / CECT 9101 / MAFF 303099) (Mesorhizobium loti (strain MAFF 303099)).